Reading from the N-terminus, the 638-residue chain is Broad-specificity ulvan lyase (638 aa).

Positions 1 to 27 are cleaved as a signal peptide; the sequence is MKRRNFIQLSSLATIGMSLPSAGIVNA.

This sequence belongs to the polysaccharide lyase 37 family.

Its subcellular location is the periplasm. The catalysed reaction is Endolytic cleavage of (1-&gt;4)-beta-galactosaminic bonds between N-acetylgalactosamine and either D-glucuronic acid or L-iduronic acid to produce a mixture of Delta(4)-unsaturated oligosaccharides of different sizes that are ultimately degraded to Delta(4)-unsaturated tetra- and disaccharides.. It catalyses the reaction Elimination of sulfate, appears to act on linkages between N-acetyl-D-glucosamine and uronate. Product is an unsaturated sugar.. Functionally, broad-specificity lyase involved in ulvan degradation. Ulvan is the main polysaccharide component of the Ulvales (green seaweed) cell wall. It is composed of disaccharide building blocks comprising 3-sulfated rhamnose (Rha3S) linked to D-glucuronic acid (GlcA), L-iduronic acid (IduA), or D-xylose (Xyl). Ulvan lyase catalyzes the endolytic cleavage of the glycosidic bond between Rha3S and the uronic acids GlcA or IduA, producing oligosaccharides that have unsaturated 4-deoxy-L-threo-hex-4-enopyranosiduronic acid (deltaUA) at the non-reducing end. This results eventually in the degradation of the ulvan polysaccharide into deltaUA-Rha3S disaccharides and deltaUA-Rha3S-Xyl-Rha3S tetrasaccharides. It is also able to degrade the glycosaminoglycans heparan sulfate and chondroitin sulfate. Not active against pectin, xanthan or alginate. The sequence is that of Broad-specificity ulvan lyase from Formosa agariphila (strain DSM 15362 / KCTC 12365 / LMG 23005 / KMM 3901 / M-2Alg 35-1).